A 1124-amino-acid chain; its full sequence is Angiopoietin-1 receptor (1124 aa).

Positions 1–22 (MDSLASLVLCGVSLLLSGTVEG) are cleaved as a signal peptide. The Extracellular segment spans residues 23-748 (AMDLILINSL…ADLGGGKMLL (726 aa)). Cys-44 and Cys-102 are joined by a disulfide. Residues 44 to 123 (CIASGWRPHE…RTMKMRQQAS (80 aa)) form the Ig-like C2-type 1 domain. N-linked (GlcNAc...) asparagine glycans are attached at residues Asn-140 and Asn-158. EGF-like domains lie at 210–252 (RCEA…RTCE), 254–299 (ACEL…LQCN), and 301–341 (ACHP…LQCE). Cystine bridges form between Cys-211-Cys-220, Cys-224-Cys-233, Cys-227-Cys-240, Cys-242-Cys-251, Cys-255-Cys-264, Cys-268-Cys-274, Cys-280-Cys-287, Cys-289-Cys-298, Cys-302-Cys-311, Cys-315-Cys-323, Cys-317-Cys-329, Cys-331-Cys-340, and Cys-370-Cys-424. Positions 350 to 440 (PKIVDLPDHI…GMVEKPFNIS (91 aa)) constitute an Ig-like C2-type 2 domain. N-linked (GlcNAc...) asparagine glycosylation is found at Asn-399, Asn-438, Asn-464, Asn-560, Asn-596, Asn-649, and Asn-691. 3 consecutive Fibronectin type-III domains span residues 447 to 541 (PLNA…TASI), 545 to 636 (PPRG…TLSD), and 641 to 735 (QPEN…LPES). The chain crosses the membrane as a helical span at residues 749 to 769 (IAILGSAGMTCLTVLLAFLII). Topologically, residues 770 to 1124 (LQLKRANVQR…GIDCSAEEAA (355 aa)) are cytoplasmic. A Protein kinase domain is found at 824-1096 (IKFQDVIGEG…QILVSLNRML (273 aa)). ATP contacts are provided by residues 830 to 838 (IGEGNFGQV) and Lys-855. The residue at position 860 (Tyr-860) is a Phosphotyrosine; by autocatalysis. Asp-964 acts as the Proton acceptor in catalysis. 3 positions are modified to phosphotyrosine; by autocatalysis: Tyr-992, Tyr-1102, and Tyr-1108.

It belongs to the protein kinase superfamily. Tyr protein kinase family. Tie subfamily. Homodimer. Heterodimer with TIE1. Interacts with ANGPT1, ANGPT2 and ANGPT4. At cell-cell contacts in quiescent cells, forms a signaling complex composed of ANGPT1 plus TEK molecules from two adjoining cells. In the absence of endothelial cell-cell contacts, interaction with ANGPT1 mediates contacts with the extracellular matrix. Interacts with PTPRB; this promotes endothelial cell-cell adhesion. Interacts with DOK2, GRB2, GRB7, GRB14, PIK3R1 and PTPN11/SHP2. Colocalizes with DOK2 at contacts with the extracellular matrix in migrating cells. Interacts (tyrosine phosphorylated) with TNIP2. Interacts (tyrosine phosphorylated) with SHC1 (via SH2 domain). Proteolytic processing leads to the shedding of the extracellular domain (soluble TIE-2 alias sTIE-2). Post-translationally, autophosphorylated on tyrosine residues in response to ligand binding. Autophosphorylation occurs in trans, i.e. one subunit of the dimeric receptor phosphorylates tyrosine residues on the other subunit. Autophosphorylation occurs in a sequential manner, where Tyr-992 in the kinase activation loop is phosphorylated first, followed by autophosphorylation at Tyr-1108 and at additional tyrosine residues. ANGPT1-induced phosphorylation is impaired during hypoxia, due to increased expression of ANGPT2. Phosphorylation is important for interaction with GRB14, PIK3R1 and PTPN11. Phosphorylation at Tyr-1102 is important for interaction with SHC1, GRB2 and GRB7. Phosphorylation at Tyr-1108 is important for interaction with DOK2 and for coupling to downstream signal transduction pathways in endothelial cells. Dephosphorylated by PTPRB. In terms of processing, ubiquitinated. The phosphorylated receptor is ubiquitinated and internalized, leading to its degradation. As to expression, detected in umbilical vein endothelial cells. Proteolytic processing gives rise to a soluble extracellular domain that is detected in blood plasma (at protein level). Predominantly expressed in endothelial cells and their progenitors, the angioblasts. Has been directly found in placenta and lung, with a lower level in umbilical vein endothelial cells, brain and kidney.

The protein localises to the cell membrane. Its subcellular location is the cell junction. It localises to the focal adhesion. It is found in the cytoplasm. The protein resides in the cytoskeleton. The protein localises to the secreted. It carries out the reaction L-tyrosyl-[protein] + ATP = O-phospho-L-tyrosyl-[protein] + ADP + H(+). With respect to regulation, angiopoietin binding leads to receptor dimerization and activation by autophosphorylation at Tyr-992 on the kinase activation loop. Inhibited by staurosporine, K252a, PP2, damnacanthal, SB203580, CEP-11207, CEP-11981 and CE-245677. Inhibited by triazine, thienopyrimidine and thiazolopyrimidine derivatives. In terms of biological role, tyrosine-protein kinase that acts as a cell-surface receptor for ANGPT1, ANGPT2 and ANGPT4 and regulates angiogenesis, endothelial cell survival, proliferation, migration, adhesion and cell spreading, reorganization of the actin cytoskeleton, but also maintenance of vascular quiescence. Has anti-inflammatory effects by preventing the leakage of pro-inflammatory plasma proteins and leukocytes from blood vessels. Required for normal angiogenesis and heart development during embryogenesis. Required for post-natal hematopoiesis. After birth, activates or inhibits angiogenesis, depending on the context. Inhibits angiogenesis and promotes vascular stability in quiescent vessels, where endothelial cells have tight contacts. In quiescent vessels, ANGPT1 oligomers recruit TEK to cell-cell contacts, forming complexes with TEK molecules from adjoining cells, and this leads to preferential activation of phosphatidylinositol 3-kinase and the AKT1 signaling cascades. In migrating endothelial cells that lack cell-cell adhesions, ANGT1 recruits TEK to contacts with the extracellular matrix, leading to the formation of focal adhesion complexes, activation of PTK2/FAK and of the downstream kinases MAPK1/ERK2 and MAPK3/ERK1, and ultimately to the stimulation of sprouting angiogenesis. ANGPT1 signaling triggers receptor dimerization and autophosphorylation at specific tyrosine residues that then serve as binding sites for scaffold proteins and effectors. Signaling is modulated by ANGPT2 that has lower affinity for TEK, can promote TEK autophosphorylation in the absence of ANGPT1, but inhibits ANGPT1-mediated signaling by competing for the same binding site. Signaling is also modulated by formation of heterodimers with TIE1, and by proteolytic processing that gives rise to a soluble TEK extracellular domain. The soluble extracellular domain modulates signaling by functioning as decoy receptor for angiopoietins. TEK phosphorylates DOK2, GRB7, GRB14, PIK3R1; SHC1 and TIE1. The polypeptide is Angiopoietin-1 receptor (Homo sapiens (Human)).